We begin with the raw amino-acid sequence, 462 residues long: Malonyl-coenzyme:anthocyanin 5-O-glucoside-6'''-O-malonyltransferase (462 aa).

Residues histidine 167 and aspartate 390 each act as proton acceptor in the active site.

Belongs to the plant acyltransferase family. As to expression, detected in petals and sepals, and at lower levels in bracts and red stems.

The catalysed reaction is pelargonidin 3-O-(6-O-[(E)-caffeoyl]-beta-D-glucoside) 5-O-beta-D-glucoside + malonyl-CoA = 4'''-demalonylsalvianin + CoA. Its pathway is pigment biosynthesis; anthocyanin biosynthesis. With respect to regulation, completely inhibited by 10 mM p-coumaric acid, this inhibition is rapid, reversible and non-competitive. Completely inhibited by 0.1 mM Cu(2+), 0.1 mM Hg(2+) and 10 mM caffeic acid. Partially inhibited by 5 mM N-ethylmaleimide, 1 mM diethylpyrocarbonate and 1 mM acetyl-CoA. Catalyzes the transfer of a malonyl group from malonyl-CoA to the 6'''-hydroxyl group of the 5-glucosyl moiety of anthocyanins. Active towards bisdemalonylsalvianin (pelargonidin 3-O-(6-caffeoyl-beta-D-glucoside) 5-O-beta-D-glucoside) and shisonin, but not towards nodemalonylsalvianin, salvianin, pelargonidin 3,5-diglucoside and delphinidin 3,5-diglucoside. In Salvia splendens (Scarlet sage), this protein is Malonyl-coenzyme:anthocyanin 5-O-glucoside-6'''-O-malonyltransferase.